The primary structure comprises 204 residues: High frequency lysogenization protein HflD homolog (204 aa).

This sequence belongs to the HflD family.

It localises to the cytoplasm. Its subcellular location is the cell inner membrane. This is High frequency lysogenization protein HflD homolog from Stenotrophomonas maltophilia (strain R551-3).